Consider the following 346-residue polypeptide: Uroporphyrinogen decarboxylase (346 aa).

Substrate contacts are provided by residues 23–27 (RQAGR), D72, Y155, S209, and H322.

This sequence belongs to the uroporphyrinogen decarboxylase family. Homodimer.

The protein resides in the cytoplasm. The enzyme catalyses uroporphyrinogen III + 4 H(+) = coproporphyrinogen III + 4 CO2. It participates in porphyrin-containing compound metabolism; protoporphyrin-IX biosynthesis; coproporphyrinogen-III from 5-aminolevulinate: step 4/4. In terms of biological role, catalyzes the decarboxylation of four acetate groups of uroporphyrinogen-III to yield coproporphyrinogen-III. The polypeptide is Uroporphyrinogen decarboxylase (Anaeromyxobacter dehalogenans (strain 2CP-C)).